The primary structure comprises 1100 residues: Guanylate cyclase 2G (1100 aa).

The signal sequence occupies residues 1–43 (MASRTRSESPLEPRLYAGAGSRADHPSLVLMLSVVMLVTCLEA). Topologically, residues 44 to 481 (AKLTVGFHAP…VAGMTVTVTA (438 aa)) are extracellular. N-linked (GlcNAc...) asparagine glycosylation is found at N55, N85, N94, N217, N225, N238, N418, N440, and N443. Residues 482–502 (VIPTVTFLVLASAAAITGLML) form a helical membrane-spanning segment. Over 503–1100 (WRLRGKVQSH…EEEAKVSEIL (598 aa)) the chain is Cytoplasmic. Residues 546–837 (SDTSTVKASA…EASPRGHVSI (292 aa)) enclose the Protein kinase domain. One can recognise a Guanylate cyclase domain in the interval 901–1031 (TIFFSDIVGF…DTVNMASRME (131 aa)).

It belongs to the adenylyl cyclase class-4/guanylyl cyclase family. As to quaternary structure, homooligomer. In vitro interacts with NPR1/GC-A. Post-translationally, N-glycosylated. Highly expressed in testis.

The protein localises to the cell membrane. It carries out the reaction GTP = 3',5'-cyclic GMP + diphosphate. This chain is Guanylate cyclase 2G (Gucy2g), found in Mus musculus (Mouse).